The sequence spans 274 residues: tRNA pseudouridine synthase A (274 aa).

Aspartate 56 serves as the catalytic Nucleophile. Residue tyrosine 109 participates in substrate binding.

Belongs to the tRNA pseudouridine synthase TruA family.

It catalyses the reaction uridine(38/39/40) in tRNA = pseudouridine(38/39/40) in tRNA. Formation of pseudouridine at positions 38, 39 and 40 in the anticodon stem and loop of transfer RNAs. The polypeptide is tRNA pseudouridine synthase A (Methanosphaera stadtmanae (strain ATCC 43021 / DSM 3091 / JCM 11832 / MCB-3)).